A 100-amino-acid polypeptide reads, in one-letter code: uncharacterized protein (100 aa).

The segment at 1 to 86 (MRGTRRGPSG…RHRPPEVTEP (86 aa)) is disordered. The span at 35 to 48 (DTPPPRAPPPPPPL) shows a compositional bias: pro residues.

This is an uncharacterized protein from Human herpesvirus 6A (strain Uganda-1102) (HHV-6 variant A).